The chain runs to 192 residues: Ribosomal RNA small subunit methyltransferase G (192 aa).

S-adenosyl-L-methionine-binding positions include glycine 63, phenylalanine 68, 112-113 (IE), and arginine 125.

It belongs to the methyltransferase superfamily. RNA methyltransferase RsmG family.

It localises to the cytoplasm. The catalysed reaction is guanosine(527) in 16S rRNA + S-adenosyl-L-methionine = N(7)-methylguanosine(527) in 16S rRNA + S-adenosyl-L-homocysteine. Functionally, specifically methylates the N7 position of guanine in position 527 of 16S rRNA. The protein is Ribosomal RNA small subunit methyltransferase G of Rickettsia felis (strain ATCC VR-1525 / URRWXCal2) (Rickettsia azadi).